We begin with the raw amino-acid sequence, 377 residues long: uncharacterized protein (377 aa).

This is an uncharacterized protein from Caenorhabditis elegans.